Consider the following 425-residue polypeptide: Histidine--tRNA ligase (425 aa).

Belongs to the class-II aminoacyl-tRNA synthetase family. Homodimer.

The protein resides in the cytoplasm. It carries out the reaction tRNA(His) + L-histidine + ATP = L-histidyl-tRNA(His) + AMP + diphosphate + H(+). This is Histidine--tRNA ligase from Desulforapulum autotrophicum (strain ATCC 43914 / DSM 3382 / VKM B-1955 / HRM2) (Desulfobacterium autotrophicum).